Here is a 274-residue protein sequence, read N- to C-terminus: Peroxiredoxin-4 (274 aa).

The signal sequence occupies residues 1–40 (MEARSKLLDGTTASRRWTRKLVLLLPPLLLFLLRTESLQG). The 159-residue stretch at 82–240 (AKISKPAPYW…TLRLVQAFQY (159 aa)) folds into the Thioredoxin domain. Residue C127 is the Cysteine sulfenic acid (-SOH) intermediate of the active site.

This sequence belongs to the peroxiredoxin family. AhpC/Prx1 subfamily. As to quaternary structure, homodimer; disulfide-linked, upon oxidation. 5 homodimers assemble to form a ring-like decamer. The enzyme can be inactivated by further oxidation of the cysteine sulfenic acid (C(P)-SOH) to sulphinic acid (C(P)-SO2H) and sulphonic acid (C(P)-SO3H) instead of its condensation to a disulfide bond.

The protein localises to the cytoplasm. Its subcellular location is the endoplasmic reticulum. It catalyses the reaction a hydroperoxide + [thioredoxin]-dithiol = an alcohol + [thioredoxin]-disulfide + H2O. Functionally, thiol-specific peroxidase that catalyzes the reduction of hydrogen peroxide and organic hydroperoxides to water and alcohols, respectively. Plays a role in cell protection against oxidative stress by detoxifying peroxides and as sensor of hydrogen peroxide-mediated signaling events. Regulates the activation of NF-kappa-B in the cytosol by a modulation of I-kappa-B-alpha phosphorylation. In Mus musculus (Mouse), this protein is Peroxiredoxin-4 (Prdx4).